The primary structure comprises 338 residues: L-lysine 2,3-aminomutase (338 aa).

The 224-residue stretch at 107-330 (HKYRNRLLFM…PKLAREIAGE (224 aa)) folds into the Radical SAM core domain. Positions 121, 125, and 128 each coordinate [4Fe-4S] cluster. Lys333 carries the post-translational modification N6-(pyridoxal phosphate)lysine.

It belongs to the radical SAM superfamily. KamA family. The cofactor is [4Fe-4S] cluster. It depends on pyridoxal 5'-phosphate as a cofactor.

The enzyme catalyses L-lysine = D-beta-lysine. With EpmA is involved in the beta-lysylation step of the post-translational modification of translation elongation factor P (EF-P) on 'Lys-34'. EpmB appears to act before EpmA. Displays lysine 2,3-aminomutase activity, producing (R)-beta-lysine from (S)-alpha-lysine (L-lysine). The protein is L-lysine 2,3-aminomutase (epmB) of Haemophilus influenzae (strain ATCC 51907 / DSM 11121 / KW20 / Rd).